A 322-amino-acid polypeptide reads, in one-letter code: GTP 3',8-cyclase (322 aa).

Positions 5 to 217 (SYGRVIDYLR…NIIAQKYSFK (213 aa)) constitute a Radical SAM core domain. Position 14 (Arg-14) interacts with GTP. [4Fe-4S] cluster-binding residues include Cys-21 and Cys-25. Tyr-27 is an S-adenosyl-L-methionine binding site. Cys-28 provides a ligand contact to [4Fe-4S] cluster. Residue Arg-64 participates in GTP binding. Gly-68 is an S-adenosyl-L-methionine binding site. Thr-95 serves as a coordination point for GTP. S-adenosyl-L-methionine is bound at residue Ser-119. A GTP-binding site is contributed by Lys-155. Residue Met-189 participates in S-adenosyl-L-methionine binding. Residues Cys-249 and Cys-252 each coordinate [4Fe-4S] cluster. Residue 254-256 (RIR) coordinates GTP. Cys-266 contributes to the [4Fe-4S] cluster binding site.

The protein belongs to the radical SAM superfamily. MoaA family. As to quaternary structure, monomer and homodimer. The cofactor is [4Fe-4S] cluster.

The enzyme catalyses GTP + AH2 + S-adenosyl-L-methionine = (8S)-3',8-cyclo-7,8-dihydroguanosine 5'-triphosphate + 5'-deoxyadenosine + L-methionine + A + H(+). It participates in cofactor biosynthesis; molybdopterin biosynthesis. Functionally, catalyzes the cyclization of GTP to (8S)-3',8-cyclo-7,8-dihydroguanosine 5'-triphosphate. The chain is GTP 3',8-cyclase from Campylobacter lari (strain RM2100 / D67 / ATCC BAA-1060).